A 251-amino-acid polypeptide reads, in one-letter code: Tryptophan synthase alpha chain (251 aa).

Active-site proton acceptor residues include Glu46 and Asp57.

Belongs to the TrpA family. Tetramer of two alpha and two beta chains.

It catalyses the reaction (1S,2R)-1-C-(indol-3-yl)glycerol 3-phosphate + L-serine = D-glyceraldehyde 3-phosphate + L-tryptophan + H2O. The protein operates within amino-acid biosynthesis; L-tryptophan biosynthesis; L-tryptophan from chorismate: step 5/5. Its function is as follows. The alpha subunit is responsible for the aldol cleavage of indoleglycerol phosphate to indole and glyceraldehyde 3-phosphate. The protein is Tryptophan synthase alpha chain of Karelsulcia muelleri (strain GWSS) (Sulcia muelleri).